A 254-amino-acid polypeptide reads, in one-letter code: rRNA N-glycosylase sapovaccarin-S1 (254 aa).

It belongs to the ribosome-inactivating protein family. Type 1 RIP subfamily. Expressed in seeds; most abundant in the perisperm.

The enzyme catalyses Endohydrolysis of the N-glycosidic bond at one specific adenosine on the 28S rRNA.. In terms of biological role, exhibits N-glycosylase activity. Catalyzes the release of one adenine from a ribosome. Acts as a ribosome-inactivating protein and inhibits protein synthesis in a rabbit-reticulocyte lysate system and in various cell lines (in vitro). Induces cell death in Huh-7 liver cells. May contribute to the protection against plant pests and predators or play a role in regulating the death of plant cells. This is rRNA N-glycosylase sapovaccarin-S1 from Gypsophila vaccaria (Cow soapwort).